Reading from the N-terminus, the 330-residue chain is Phenylalanine--tRNA ligase alpha subunit (330 aa).

Glutamate 254 contributes to the Mg(2+) binding site.

This sequence belongs to the class-II aminoacyl-tRNA synthetase family. Phe-tRNA synthetase alpha subunit type 1 subfamily. As to quaternary structure, tetramer of two alpha and two beta subunits. It depends on Mg(2+) as a cofactor.

The protein localises to the cytoplasm. It carries out the reaction tRNA(Phe) + L-phenylalanine + ATP = L-phenylalanyl-tRNA(Phe) + AMP + diphosphate + H(+). The protein is Phenylalanine--tRNA ligase alpha subunit (pheS) of Neisseria meningitidis serogroup A / serotype 4A (strain DSM 15465 / Z2491).